Reading from the N-terminus, the 582-residue chain is DNA primase (582 aa).

A CHC2-type zinc finger spans residues 40 to 64 (CPFHHEKTPSFTVSQKKQFYHCFGC). The Toprim domain occupies 259 to 341 (EMLLVVEGYM…GRQLKFVFLP (83 aa)). The Mg(2+) site is built by Glu-265, Asp-309, and Asp-311.

The protein belongs to the DnaG primase family. As to quaternary structure, monomer. Interacts with DnaB. Requires Zn(2+) as cofactor. It depends on Mg(2+) as a cofactor.

The enzyme catalyses ssDNA + n NTP = ssDNA/pppN(pN)n-1 hybrid + (n-1) diphosphate.. Functionally, RNA polymerase that catalyzes the synthesis of short RNA molecules used as primers for DNA polymerase during DNA replication. This chain is DNA primase, found in Pasteurella multocida (strain Pm70).